Here is a 47-residue protein sequence, read N- to C-terminus: Thionin (47 aa).

Cystine bridges form between C3–C41, C4–C33, C12–C31, and C16–C27.

The protein belongs to the plant thionin (TC 1.C.44) family. 4 C-C subfamily.

The protein resides in the secreted. Functionally, thionins are small plant proteins which are toxic to animal cells. They seem to exert their toxic effect at the level of the cell membrane. Their precise function is not known. In Pyrularia pubera (Buffalo nut), this protein is Thionin (THI1).